The sequence spans 460 residues: 3-isopropylmalate dehydratase large subunit (460 aa).

3 residues coordinate [4Fe-4S] cluster: Cys-338, Cys-398, and Cys-401.

This sequence belongs to the aconitase/IPM isomerase family. LeuC type 1 subfamily. Heterodimer of LeuC and LeuD. [4Fe-4S] cluster serves as cofactor.

It carries out the reaction (2R,3S)-3-isopropylmalate = (2S)-2-isopropylmalate. Its pathway is amino-acid biosynthesis; L-leucine biosynthesis; L-leucine from 3-methyl-2-oxobutanoate: step 2/4. Its function is as follows. Catalyzes the isomerization between 2-isopropylmalate and 3-isopropylmalate, via the formation of 2-isopropylmaleate. In Streptococcus gordonii (strain Challis / ATCC 35105 / BCRC 15272 / CH1 / DL1 / V288), this protein is 3-isopropylmalate dehydratase large subunit.